Reading from the N-terminus, the 471-residue chain is Putative multidrug resistance protein MdtD (471 aa).

Residues 1–11 (MTDLPDSTRWQ) lie on the Periplasmic side of the membrane. Residues 12 to 32 (LWIVAFGFFMQSLDTTIVNTA) traverse the membrane as a helical segment. Residues 33 to 48 (LPSMAQSLGESPLHMH) are Cytoplasmic-facing. Residues 49 to 69 (MVIVSYVLTVAVMLPASGWLA) form a helical membrane-spanning segment. The Periplasmic segment spans residues 70–76 (DKVGVRN). Residues 77–97 (IFFTAIVLFTLGSLFCALSAT) form a helical membrane-spanning segment. Residues 98 to 101 (LNEL) are Cytoplasmic-facing. A helical transmembrane segment spans residues 102-124 (LLARALQGVGGAMMVPVGRLTVM). Topologically, residues 125-137 (KIVPREQYMAAMT) are periplasmic. The helical transmembrane segment at 138 to 158 (FVTLPGQVGPLLGPALGGLLV) threads the bilayer. Over 159 to 164 (EYASWH) the chain is Cytoplasmic. Residues 165-185 (WIFLINIPVGIIGAIATLMLM) traverse the membrane as a helical segment. The Periplasmic portion of the chain corresponds to 186–196 (PNYTMQTRRFD). Residues 197-217 (LSGFLLLAVGMAVLTLALDGS) form a helical membrane-spanning segment. Residues 218-224 (KGTGLSP) are Cytoplasmic-facing. Residues 225–245 (LAIAGLAAIGVVALVLYLLHA) traverse the membrane as a helical segment. At 246–262 (RNNNRALFSLKLFRTRT) the chain is on the periplasmic side. The chain crosses the membrane as a helical span at residues 263-283 (FSLGLAGSFAGRIGSGMLPFM). The Cytoplasmic portion of the chain corresponds to 284–285 (TP). The helical transmembrane segment at 286–306 (VFLQIGLGFSPFHAGLMMIPM) threads the bilayer. Topologically, residues 307–341 (VLGSMGMKRIVVQVVNRFGYRRVLVATTLGLSLVT) are periplasmic. The helical transmembrane segment at 342 to 362 (LLFMTTALLGWYYVLPFVLFL) threads the bilayer. Residues 363–395 (QGMVNSTRFSSMNTLTLKDLPDNLASSGNSLLS) are Cytoplasmic-facing. The helical transmembrane segment at 396-416 (MIMQLSMSIGVTIAGLLLGLF) threads the bilayer. At 417–430 (GSQHVSVDSSTTQT) the chain is on the periplasmic side. The helical transmembrane segment at 431–451 (VFMYTWLSMALIIALPAFIFA) threads the bilayer. Over 452–471 (RVPNDTHQNVAISRRKRSAQ) the chain is Cytoplasmic.

It belongs to the major facilitator superfamily. TCR/Tet family.

It localises to the cell inner membrane. This is Putative multidrug resistance protein MdtD from Escherichia fergusonii (strain ATCC 35469 / DSM 13698 / CCUG 18766 / IAM 14443 / JCM 21226 / LMG 7866 / NBRC 102419 / NCTC 12128 / CDC 0568-73).